We begin with the raw amino-acid sequence, 87 residues long: DNA-directed RNA polymerase subunit omega (87 aa).

This sequence belongs to the RNA polymerase subunit omega family. The RNAP catalytic core consists of 2 alpha, 1 beta, 1 beta' and 1 omega subunit. When a sigma factor is associated with the core the holoenzyme is formed, which can initiate transcription.

The catalysed reaction is RNA(n) + a ribonucleoside 5'-triphosphate = RNA(n+1) + diphosphate. In terms of biological role, promotes RNA polymerase assembly. Latches the N- and C-terminal regions of the beta' subunit thereby facilitating its interaction with the beta and alpha subunits. This is DNA-directed RNA polymerase subunit omega from Pseudomonas syringae pv. syringae (strain B728a).